Consider the following 923-residue polypeptide: RNA polymerase-associated protein RapA (923 aa).

The 171-residue stretch at 162–332 (EVGNRVNPRV…FARLRLLDPE (171 aa)) folds into the Helicase ATP-binding domain. 175–182 (DEVGLGKT) is an ATP binding site. The DEAH box motif lies at 278–281 (DEAH). The Helicase C-terminal domain maps to 443 to 597 (KIDWLIDFLK…TCPMGMALFS (155 aa)).

This sequence belongs to the SNF2/RAD54 helicase family. RapA subfamily. Interacts with the RNAP. Has a higher affinity for the core RNAP than for the holoenzyme. Its ATPase activity is stimulated by binding to RNAP.

Transcription regulator that activates transcription by stimulating RNA polymerase (RNAP) recycling in case of stress conditions such as supercoiled DNA or high salt concentrations. Probably acts by releasing the RNAP, when it is trapped or immobilized on tightly supercoiled DNA. Does not activate transcription on linear DNA. Probably not involved in DNA repair. The polypeptide is RNA polymerase-associated protein RapA (Haemophilus influenzae (strain PittEE)).